The chain runs to 284 residues: Homeobox protein SIX1 (284 aa).

A DNA-binding region (homeobox) is located at residues 124 to 183 (GEETSYCFKEKSRGVLREWYAHNPYPSPREKRELAEATGLTTTQVSNWFKNRRQRDRAAE). A disordered region spans residues 168-284 (VSNWFKNRRQ…LTSSLVDLGS (117 aa)). The span at 179 to 190 (DRAAEAKERENT) shows a compositional bias: basic and acidic residues. The span at 227-284 (DQNSVLLLQSNMGHARSSNYSLPGLTASQPSHGLQAHQHQLQDSLLGPLTSSLVDLGS) shows a compositional bias: polar residues.

Belongs to the SIX/Sine oculis homeobox family. As to quaternary structure, interacts with DACH1. Interacts with EYA1. Interacts with EYA2. Interacts with CDH1. Interacts with TBX18. Interacts with CEBPA. Interacts with CEBPB. Interacts with EBF2. Phosphorylated during interphase; becomes hyperphosphorylated during mitosis. Hyperphosphorylation impairs binding to promoter elements. In terms of processing, ubiquitinated by the anaphase promoting complex (APC), leading to its proteasomal degradation. As to expression, expressed in phalangeal tendons and in skeletal muscle and in head and body mesenchyme.

The protein resides in the nucleus. It localises to the cytoplasm. In terms of biological role, transcription factor that is involved in the regulation of cell proliferation, apoptosis and embryonic development. Plays an important role in the development of several organs, including kidney, muscle and inner ear. Depending on context, functions as a transcriptional repressor or activator. Lacks an activation domain, and requires interaction with EYA family members for transcription activation. Mediates nuclear translocation of EYA1 and EYA2. Binds the 5'-TCA[AG][AG]TTNC-3' motif present in the MEF3 element in the MYOG promoter and CIDEA enhancer. Regulates the expression of numerous genes, including MYC, CCNA1, CCND1 and EZR. Acts as an activator of the IGFBP5 promoter, probably coactivated by EYA2. Repression of precursor cell proliferation in myoblasts is switched to activation through recruitment of EYA3 to the SIX1-DACH1 complex. During myogenesis, seems to act together with EYA2 and DACH2. Regulates the expression of CCNA1. Promotes brown adipocyte differentiation. The sequence is that of Homeobox protein SIX1 (Six1) from Mus musculus (Mouse).